Reading from the N-terminus, the 262-residue chain is Thiazole synthase (262 aa).

The active-site Schiff-base intermediate with DXP is Lys-98. 1-deoxy-D-xylulose 5-phosphate is bound by residues Gly-159, 186 to 187 (AG), and 208 to 209 (NT).

It belongs to the ThiG family. As to quaternary structure, homotetramer. Forms heterodimers with either ThiH or ThiS.

It localises to the cytoplasm. It catalyses the reaction [ThiS sulfur-carrier protein]-C-terminal-Gly-aminoethanethioate + 2-iminoacetate + 1-deoxy-D-xylulose 5-phosphate = [ThiS sulfur-carrier protein]-C-terminal Gly-Gly + 2-[(2R,5Z)-2-carboxy-4-methylthiazol-5(2H)-ylidene]ethyl phosphate + 2 H2O + H(+). It functions in the pathway cofactor biosynthesis; thiamine diphosphate biosynthesis. Catalyzes the rearrangement of 1-deoxy-D-xylulose 5-phosphate (DXP) to produce the thiazole phosphate moiety of thiamine. Sulfur is provided by the thiocarboxylate moiety of the carrier protein ThiS. In vitro, sulfur can be provided by H(2)S. The polypeptide is Thiazole synthase (Hahella chejuensis (strain KCTC 2396)).